The sequence spans 432 residues: 23S rRNA (uracil(1939)-C(5))-methyltransferase RlmD (432 aa).

Residues Arg10–Lys68 form the TRAM domain. 4 residues coordinate [4Fe-4S] cluster: Cys81, Cys87, Cys90, and Cys162. S-adenosyl-L-methionine-binding residues include Gln265, Phe294, Asn299, Glu315, Asn342, and Asp363. The active-site Nucleophile is the Cys389.

The protein belongs to the class I-like SAM-binding methyltransferase superfamily. RNA M5U methyltransferase family. RlmD subfamily.

The catalysed reaction is uridine(1939) in 23S rRNA + S-adenosyl-L-methionine = 5-methyluridine(1939) in 23S rRNA + S-adenosyl-L-homocysteine + H(+). In terms of biological role, catalyzes the formation of 5-methyl-uridine at position 1939 (m5U1939) in 23S rRNA. The polypeptide is 23S rRNA (uracil(1939)-C(5))-methyltransferase RlmD (Cronobacter sakazakii (strain ATCC BAA-894) (Enterobacter sakazakii)).